Consider the following 196-residue polypeptide: Transcription repressor OFP10 (196 aa).

The region spanning 100 to 159 (MAKESINPFEDYKKSMNQMIEERYIETESELKELLRCFLDINPSPQHNLIVRAFVDVCSH) is the OVATE domain.

As to expression, expressed in roots, cauline leaves, shoots, stems, flower buds and siliques.

The protein localises to the nucleus. In terms of biological role, transcriptional repressor that may regulate multiple aspects of plant growth and development through the regulation of BEL1-LIKE (BLH) and KNOX TALE (KNAT) homeodomain transcription factors. This chain is Transcription repressor OFP10 (OFP10), found in Arabidopsis thaliana (Mouse-ear cress).